Consider the following 594-residue polypeptide: KIF-binding protein (594 aa).

The protein belongs to the KIF-binding protein family.

The protein localises to the cytoplasm. Its subcellular location is the cytoskeleton. Functionally, activator of KIF1B plus-end-directed microtubule motor activity. Required for organization of axonal microtubules, and axonal outgrowth and maintenance during peripheral and central nervous system development. The polypeptide is KIF-binding protein (Kifbp) (Gallus gallus (Chicken)).